The following is a 348-amino-acid chain: Uroporphyrinogen decarboxylase (348 aa).

Residues 27–31, F46, D76, Y152, S207, and H320 contribute to the substrate site; that span reads RQAGR.

Belongs to the uroporphyrinogen decarboxylase family. Homodimer.

It is found in the cytoplasm. It catalyses the reaction uroporphyrinogen III + 4 H(+) = coproporphyrinogen III + 4 CO2. The protein operates within porphyrin-containing compound metabolism; protoporphyrin-IX biosynthesis; coproporphyrinogen-III from 5-aminolevulinate: step 4/4. In terms of biological role, catalyzes the decarboxylation of four acetate groups of uroporphyrinogen-III to yield coproporphyrinogen-III. The chain is Uroporphyrinogen decarboxylase from Bacillus mycoides (strain KBAB4) (Bacillus weihenstephanensis).